Here is a 1423-residue protein sequence, read N- to C-terminus: Serum albumin SDS-1 (1423 aa).

The N-terminal stretch at 1–23 (MGKAMLKLCITLMVLVFSGTAES) is a signal peptide. The propeptide occupies 24-29 (KGVMRR). 7 Albumin domains span residues 29–230 (REDE…EDFK), 231–426 (HKLT…EFKS), 427–608 (EVEK…SDFK), 609–811 (MDVE…SQAR), 812–1031 (QEAL…HTIH), 1032–1226 (MEIR…AIEK), and 1227–1422 (VIKD…AIKS). Residue His36 coordinates Cu cation. 16 disulfide bridges follow: Cys42/Cys88, Cys87/Cys96, Cys109/Cys125, Cys124/Cys135, Cys167/Cys212, Cys211/Cys221, Cys244/Cys290, Cys289/Cys298, Cys311/Cys327, Cys326/Cys337, Cys363/Cys408, Cys407/Cys416, Cys439/Cys485, Cys484/Cys493, Cys506/Cys522, and Cys521/Cys532. The N-linked (GlcNAc...) asparagine glycan is linked to Asn490. Asn541 carries N-linked (GlcNAc...) asparagine glycosylation. Intrachain disulfides connect Cys556-Cys601, Cys622-Cys668, Cys667-Cys676, Cys689-Cys705, Cys704-Cys715, Cys747-Cys792, Cys791-Cys802, Cys825-Cys871, Cys870-Cys879, Cys892-Cys907, and Cys906-Cys947. The N-linked (GlcNAc...) asparagine glycan is linked to Asn652. The N-linked (GlcNAc...) asparagine glycan is linked to Asn754. N-linked (GlcNAc...) asparagine glycosylation is found at Asn908 and Asn911. Residues 910 to 936 (SNTSTTTSTTTSTTTSTTTSTTTSTTS) are disordered. Tandem repeats lie at residues 913-916 (STTT), 917-920 (STTT), 921-924 (STTT), 925-928 (STTT), 929-932 (STTT), 933-935 (STT), and 936-939 (STTT). Positions 913-939 (STTTSTTTSTTTSTTTSTTTSTTSTTT) are 7 X 4 AA tandem repeats of S-T-T-T. An N-linked (GlcNAc...) asparagine glycan is attached at Asn954. Cystine bridges form between Cys969–Cys1014, Cys1013–Cys1022, Cys1045–Cys1091, Cys1090–Cys1099, Cys1112–Cys1128, Cys1127–Cys1138, Cys1163–Cys1208, and Cys1207–Cys1216. The N-linked (GlcNAc...) asparagine glycan is linked to Asn1070. Asn1236 carries N-linked (GlcNAc...) asparagine glycosylation. Cystine bridges form between Cys1239/Cys1285, Cys1284/Cys1291, Cys1304/Cys1320, Cys1319/Cys1330, Cys1359/Cys1404, and Cys1403/Cys1412.

Belongs to the ALB/AFP/VDB family. In terms of tissue distribution, plasma.

The protein localises to the secreted. In terms of biological role, serum albumin, the main protein of plasma, has a good binding capacity for water, Ca(2+), Na(+), K(+), fatty acids, hormones, bilirubin and drugs. Its main function is the regulation of the colloidal osmotic pressure of blood. This chain is Serum albumin SDS-1 (SDS-1), found in Petromyzon marinus (Sea lamprey).